The following is a 69-amino-acid chain: Bowman-Birk type proteinase inhibitor A2 (69 aa).

4 cysteine pairs are disulfide-bonded: C12-C31, C18-C29, C38-C45, and C42-C59.

This sequence belongs to the Bowman-Birk serine protease inhibitor family. In terms of tissue distribution, expressed in bulb (at protein level).

In terms of biological role, serine protease inhibitor. The sequence is that of Bowman-Birk type proteinase inhibitor A2 from Hyacinthus orientalis (Common hyacinth).